A 38-amino-acid chain; its full sequence is NAD-reducing hydrogenase HoxS subunit beta (38 aa).

Belongs to the [NiFe]/[NiFeSe] hydrogenase large subunit family. As to quaternary structure, tetramer of an alpha and a gamma subunits (flavin-containing dimer), and a delta and a nickel-containing beta subunits (hydrogenase dimer). FMN is required as a cofactor. Requires Ni(2+) as cofactor.

It localises to the cytoplasm. It carries out the reaction H2 + NAD(+) = NADH + H(+). The sequence is that of NAD-reducing hydrogenase HoxS subunit beta (hoxH) from Rhodococcus opacus (Nocardia opaca).